The primary structure comprises 785 residues: Phosphoinositide phosphatase SAC5 (785 aa).

One can recognise an SAC domain in the interval 158–533; sequence LSVVDLSKNF…GNTLAMQYGG (376 aa). Residues 469-480 carry the Phosphatase catalytic core motif; the sequence is RTNCIDCLDRTN. The segment covering 688–700 has biased composition (polar residues); it reads GSGQMFQGSSSNS. The disordered stretch occupies residues 688-707; that stretch reads GSGQMFQGSSSNSDSHRPND.

As to quaternary structure, component of the PI(3,5)P2 regulatory complex at least composed of ATG18, SAC/FIG4, FAB1 and VAC14. Mg(2+) is required as a cofactor. Ubiquitous with a higher level of expression in young seedlings than in other tissues.

It localises to the vacuole membrane. The catalysed reaction is a 1,2-diacyl-sn-glycero-3-phospho-(1D-myo-inositol-3,5-bisphosphate) + H2O = a 1,2-diacyl-sn-glycero-3-phospho-(1D-myo-inositol-3-phosphate) + phosphate. Functionally, the PI(3,5)P2 regulatory complex regulates both the synthesis and turnover of phosphatidylinositol 3,5-bisphosphate (PtdIns(3,5)P2). The chain is Phosphoinositide phosphatase SAC5 (SAC5) from Arabidopsis thaliana (Mouse-ear cress).